Here is a 429-residue protein sequence, read N- to C-terminus: Citrate synthase, plasmid (429 aa).

Residues H306 and D364 contribute to the active site.

The protein belongs to the citrate synthase family.

The catalysed reaction is oxaloacetate + acetyl-CoA + H2O = citrate + CoA + H(+). The protein operates within carbohydrate metabolism; tricarboxylic acid cycle; isocitrate from oxaloacetate: step 1/2. Its function is as follows. The exact function of the plasmid-encoded citrate synthase is not clear, it could help nodulation by allowing the bacteria to use citrate as a chelator of iron and calcium. This chain is Citrate synthase, plasmid (pcsA), found in Rhizobium tropici.